The sequence spans 689 residues: Glycine--tRNA ligase beta subunit (689 aa).

This sequence belongs to the class-II aminoacyl-tRNA synthetase family. Tetramer of two alpha and two beta subunits.

Its subcellular location is the cytoplasm. The enzyme catalyses tRNA(Gly) + glycine + ATP = glycyl-tRNA(Gly) + AMP + diphosphate. This chain is Glycine--tRNA ligase beta subunit, found in Salmonella paratyphi A (strain ATCC 9150 / SARB42).